The following is a 257-amino-acid chain: Beta-fibrinogenase mucrofibrase-3 (257 aa).

The signal sequence occupies residues 1 to 18 (MVLIRVLANLLILQLSYA). The propeptide occupies 19–24 (QKSSEL). The Peptidase S1 domain occupies 25 to 248 (VIGGDECNIN…HLDWIKGIIA (224 aa)). 6 cysteine pairs are disulfide-bonded: Cys-31–Cys-162, Cys-49–Cys-65, Cys-97–Cys-255, Cys-141–Cys-209, Cys-173–Cys-188, and Cys-199–Cys-224. Active-site charge relay system residues include His-64 and Asp-109. Catalysis depends on Ser-203, which acts as the Charge relay system.

Belongs to the peptidase S1 family. Snake venom subfamily. In terms of assembly, monomer. In terms of tissue distribution, expressed by the venom gland.

The protein localises to the secreted. Its function is as follows. Snake venom serine protease with fibrinogenolytic activities. Cleaves beta-chain of fibrinogen (FGB) efficiently and shows relatively lower activity on alpha-chain. This Protobothrops mucrosquamatus (Taiwan habu) protein is Beta-fibrinogenase mucrofibrase-3.